The primary structure comprises 224 residues: CASP-like protein 3A1 (224 aa).

The Cytoplasmic portion of the chain corresponds to 1 to 59; that stretch reads MMMNGQKLAPAAEVAVQLPESKVAADNISGTMSGPLVGASGGGTTAAMRPFGRKAEVMH. A helical membrane pass occupies residues 60–80; the sequence is VLLRLLCIITSVAALSFMFTA. The Extracellular portion of the chain corresponds to 81 to 106; that stretch reads QQSSTISIYGFMLPVQSKWSFSHSFE. The helical transmembrane segment at 107–127 threads the bilayer; sequence YLVGVSAAVAAHSLLQLLISM. The Cytoplasmic portion of the chain corresponds to 128 to 142; the sequence is SRLLRKSPVIPSRSH. Residues 143–163 traverse the membrane as a helical segment; it reads AWLIFAGDQVFAYAMISAGAA. Residues 164–192 lie on the Extracellular side of the membrane; the sequence is ASGVTNLNRTGIQHTALPNFCKPLQSFCD. An N-linked (GlcNAc...) asparagine glycan is attached at asparagine 171. The chain crosses the membrane as a helical span at residues 193–213; that stretch reads HVAVSIFFTFTSCFLLAASAV. Residues 214-224 lie on the Cytoplasmic side of the membrane; that stretch reads QEVIWLSRSKY.

Belongs to the Casparian strip membrane proteins (CASP) family. As to quaternary structure, homodimer and heterodimers.

The protein resides in the cell membrane. The polypeptide is CASP-like protein 3A1 (Populus trichocarpa (Western balsam poplar)).